Here is a 73-residue protein sequence, read N- to C-terminus: Large ribosomal subunit protein bL31 (73 aa).

Zn(2+) is bound by residues C16, C18, C37, and C40.

This sequence belongs to the bacterial ribosomal protein bL31 family. Type A subfamily. In terms of assembly, part of the 50S ribosomal subunit. It depends on Zn(2+) as a cofactor.

Binds the 23S rRNA. The protein is Large ribosomal subunit protein bL31 of Marinobacter nauticus (strain ATCC 700491 / DSM 11845 / VT8) (Marinobacter aquaeolei).